The following is a 567-amino-acid chain: Cytochrome P450 monooxygenase 69 (567 aa).

A helical membrane pass occupies residues 7–24 (ELAALTVVLLATGVLFYA). 4 N-linked (GlcNAc...) asparagine glycosylation sites follow: N25, N81, N223, and N279. Residue C475 participates in heme binding.

The protein belongs to the cytochrome P450 family. The cofactor is heme.

The protein resides in the membrane. Its pathway is secondary metabolite biosynthesis. Functionally, cytochrome P450 monooxygenase that is able to use 4-ethoxybenzoic acid as a substrate for oxidation. This chain is Cytochrome P450 monooxygenase 69, found in Postia placenta (strain ATCC 44394 / Madison 698-R) (Brown rot fungus).